A 369-amino-acid polypeptide reads, in one-letter code: UPF0754 membrane protein Aflv_2299 (369 aa).

A run of 2 helical transmembrane segments spans residues 1-21 (MGLF…GGMT) and 347-367 (YLGA…TFFV).

The protein belongs to the UPF0754 family.

Its subcellular location is the cell membrane. This Anoxybacillus flavithermus (strain DSM 21510 / WK1) protein is UPF0754 membrane protein Aflv_2299.